Consider the following 88-residue polypeptide: Small ribosomal subunit protein bS18B (88 aa).

It belongs to the bacterial ribosomal protein bS18 family. In terms of assembly, part of the 30S ribosomal subunit. Forms a tight heterodimer with protein bS6.

Functionally, binds as a heterodimer with protein bS6 to the central domain of the 16S rRNA, where it helps stabilize the platform of the 30S subunit. This Mycobacterium bovis (strain ATCC BAA-935 / AF2122/97) protein is Small ribosomal subunit protein bS18B (rpsR2).